The primary structure comprises 870 residues: Leucine--tRNA ligase (870 aa).

The 'HIGH' region motif lies at 42 to 52 (PYPSGKLHMGH). A 'KMSKS' region motif is present at residues 629-633 (KMSKS). Lys632 contacts ATP.

Belongs to the class-I aminoacyl-tRNA synthetase family.

The protein localises to the cytoplasm. The enzyme catalyses tRNA(Leu) + L-leucine + ATP = L-leucyl-tRNA(Leu) + AMP + diphosphate. The chain is Leucine--tRNA ligase from Azotobacter vinelandii (strain DJ / ATCC BAA-1303).